A 227-amino-acid polypeptide reads, in one-letter code: Flagellar L-ring protein 2 (227 aa).

The signal sequence occupies residues 1-17 (MKSKLAITMVSALLLAA). A lipid anchor (N-palmitoyl cysteine) is attached at C18. A lipid anchor (S-diacylglycerol cysteine) is attached at C18.

The protein belongs to the FlgH family. In terms of assembly, the basal body constitutes a major portion of the flagellar organelle and consists of four rings (L,P,S, and M) mounted on a central rod.

It localises to the cell outer membrane. The protein localises to the bacterial flagellum basal body. Functionally, assembles around the rod to form the L-ring and probably protects the motor/basal body from shearing forces during rotation. The chain is Flagellar L-ring protein 2 from Chromobacterium violaceum (strain ATCC 12472 / DSM 30191 / JCM 1249 / CCUG 213 / NBRC 12614 / NCIMB 9131 / NCTC 9757 / MK).